The sequence spans 56 residues: Large ribosomal subunit protein bL33 (56 aa).

The protein belongs to the bacterial ribosomal protein bL33 family.

The protein is Large ribosomal subunit protein bL33 of Tropheryma whipplei (strain TW08/27) (Whipple's bacillus).